A 366-amino-acid polypeptide reads, in one-letter code: Galactoside alpha-(1,2)-fucosyltransferase 1 (366 aa).

Over 1 to 8 (MWPLSHRH) the chain is Cytoplasmic. A helical; Signal-anchor for type II membrane protein membrane pass occupies residues 9-25 (LCLAFLLVCVLSAISFF). Over 26–366 (LHIHQDSFRH…LSPLWTLAEP (341 aa)) the chain is Lumenal. Residues N66, N302, and N328 are each glycosylated (N-linked (GlcNAc...) asparagine).

Belongs to the glycosyltransferase 11 family.

The protein localises to the golgi apparatus. The protein resides in the golgi stack membrane. The enzyme catalyses a beta-D-galactosyl-(1-&gt;4)-N-acetyl-beta-D-glucosaminyl derivative + GDP-beta-L-fucose = an alpha-L-Fuc-(1-&gt;2)-beta-D-Gal-(1-&gt;4)-beta-D-GlcNAc derivative + GDP + H(+). The catalysed reaction is a ganglioside GA1 + GDP-beta-L-fucose = a ganglioside Fuc-GA1 + GDP + H(+). It catalyses the reaction a beta-D-Gal-(1-&gt;3)-beta-D-GlcNAc-(1-&gt;3)-beta-D-Gal-(1-&gt;4)-beta-D-Glc-(1&lt;-&gt;1')-Cer(d18:1(4E)) + GDP-beta-L-fucose = alpha-L-fucosyl-(1-&gt;2)- beta-D-galactosyl-(1-&gt;3)-N-acetyl-beta-D-glucosaminyl-(1-&gt;3)-beta-D-galactosyl-(1-&gt;4)-beta-D-glucosyl-(1&lt;-&gt;1')-N-acylsphing-4-enine + GDP + H(+). It carries out the reaction a neolactoside nLc4Cer(d18:1(4E)) + GDP-beta-L-fucose = a neolactoside IV(2)-alpha-Fuc-nLc4Cer(d18:1(4E)) + GDP + H(+). The enzyme catalyses a ganglioside GM1 + GDP-beta-L-fucose = a ganglioside Fuc-GM1 + GDP + H(+). The catalysed reaction is beta-D-galactosyl-(1-&gt;3)-N-acetyl-D-galactosamine + GDP-beta-L-fucose = alpha-L-fucosyl-(1-&gt;2)-beta-D-galactosyl-(1-&gt;3)-N-acetyl-D-galactosamine + GDP + H(+). Its pathway is protein modification; protein glycosylation. Functionally, catalyzes the transfer of L-fucose, from a guanosine diphosphate-beta-L-fucose, to the terminal galactose residue of glycoconjugates through an alpha(1,2) linkage leading to H antigen synthesis that is an intermediate substrate in the synthesis of ABO blood group antigens. H antigen is essential for maturation of the glomerular layer of the main olfactory bulb, in cell migration and early cell-cell contacts during tumor associated angiogenesis. Preferentially fucosylates soluble lactose and to a lesser extent fucosylates glycolipids gangliosides GA1 and GM1a. In Ateles belzebuth (White-bellied spider monkey), this protein is Galactoside alpha-(1,2)-fucosyltransferase 1.